A 134-amino-acid polypeptide reads, in one-letter code: Putative pre-16S rRNA nuclease (134 aa).

It belongs to the YqgF nuclease family.

It is found in the cytoplasm. Its function is as follows. Could be a nuclease involved in processing of the 5'-end of pre-16S rRNA. The chain is Putative pre-16S rRNA nuclease from Helicobacter pylori (strain J99 / ATCC 700824) (Campylobacter pylori J99).